Consider the following 349-residue polypeptide: MNTTVAVPRAIIWKGDSITILNQTKLPHVAEYKTLTSIEDVWKSIVMLEVRGAPAIGIAAAFGLALAAQKYEAINIVEFKTKFNRDCNYLGTSRPTAVNLFWAIDRMRAAIEEVSTIKIAREILEEEALQIQQEDEQVCRSLGEHALTCFQDGDRILTICNAGSIATARYGTALAPFYIGKEKGIHLHAYACETRPVLQGARLTTWELREAGVDVTLITDNMAAHTIRTKNISAIIVGADRIVANGDTANKVGTLNLAILAKHYQIPFYVAAPLSTFDTKKKTGNEIIIEERDETEVTKINGQQIAPAGIHIYNPAFDITPHEFISGIITEKGILQGDYTKEIASLFEK.

Residues R51–A53, R94, and Q199 each bind substrate. Residue D240 is the Proton donor of the active site. N250–K251 provides a ligand contact to substrate.

The protein belongs to the eIF-2B alpha/beta/delta subunits family. MtnA subfamily. Homodimer.

The catalysed reaction is 5-(methylsulfanyl)-alpha-D-ribose 1-phosphate = 5-(methylsulfanyl)-D-ribulose 1-phosphate. Its pathway is amino-acid biosynthesis; L-methionine biosynthesis via salvage pathway; L-methionine from S-methyl-5-thio-alpha-D-ribose 1-phosphate: step 1/6. Its function is as follows. Catalyzes the interconversion of methylthioribose-1-phosphate (MTR-1-P) into methylthioribulose-1-phosphate (MTRu-1-P). The chain is Methylthioribose-1-phosphate isomerase from Bacillus cytotoxicus (strain DSM 22905 / CIP 110041 / 391-98 / NVH 391-98).